A 324-amino-acid chain; its full sequence is Glyoxylate/hydroxypyruvate reductase B (324 aa).

Residues R237 and E266 contribute to the active site. Residue H285 is the Proton donor of the active site.

Belongs to the D-isomer specific 2-hydroxyacid dehydrogenase family. GhrB subfamily. Homodimer.

It is found in the cytoplasm. It catalyses the reaction glycolate + NADP(+) = glyoxylate + NADPH + H(+). The enzyme catalyses (R)-glycerate + NAD(+) = 3-hydroxypyruvate + NADH + H(+). The catalysed reaction is (R)-glycerate + NADP(+) = 3-hydroxypyruvate + NADPH + H(+). Its function is as follows. Catalyzes the NADPH-dependent reduction of glyoxylate and hydroxypyruvate into glycolate and glycerate, respectively. In Shigella sonnei (strain Ss046), this protein is Glyoxylate/hydroxypyruvate reductase B.